A 208-amino-acid chain; its full sequence is Protein-L-isoaspartate O-methyltransferase (208 aa).

The active site involves Ser-59.

This sequence belongs to the methyltransferase superfamily. L-isoaspartyl/D-aspartyl protein methyltransferase family.

It is found in the cytoplasm. The catalysed reaction is [protein]-L-isoaspartate + S-adenosyl-L-methionine = [protein]-L-isoaspartate alpha-methyl ester + S-adenosyl-L-homocysteine. Functionally, catalyzes the methyl esterification of L-isoaspartyl residues in peptides and proteins that result from spontaneous decomposition of normal L-aspartyl and L-asparaginyl residues. It plays a role in the repair and/or degradation of damaged proteins. The sequence is that of Protein-L-isoaspartate O-methyltransferase from Citrobacter koseri (strain ATCC BAA-895 / CDC 4225-83 / SGSC4696).